Here is a 141-residue protein sequence, read N- to C-terminus: Single-stranded DNA-binding protein 2 (141 aa).

Residues 1-104 form the SSB domain; sequence MLNRTVLVGR…VVADSVQFLE (104 aa). Positions 104–141 are disordered; sequence EPKNNNQQQNNNYQQQRQTQTGNNPFDNNADSIEDLPF. Low complexity predominate over residues 107-127; sequence NNNQQQNNNYQQQRQTQTGNN.

Homotetramer.

The sequence is that of Single-stranded DNA-binding protein 2 (ssb-p) from Staphylococcus aureus (strain Mu50 / ATCC 700699).